A 244-amino-acid polypeptide reads, in one-letter code: Small ribosomal subunit protein uS2 (244 aa).

Belongs to the universal ribosomal protein uS2 family.

This chain is Small ribosomal subunit protein uS2, found in Endomicrobium trichonymphae.